The sequence spans 327 residues: Eukaryotic translation initiation factor 3 subunit I (327 aa).

5 WD repeats span residues 8 to 47, 50 to 89, 147 to 186, 189 to 228, and 286 to 327; these read GHQRAITQIKYNREGDLIFSSAKDSKPSVWYSLNGERLGT, GHIGAVWCVDVDWTTTRLITGAGDMNTFLWDVETGTALGK, EQQSKITSMLWGALDETVITGHENGSLRIWDLRAVKELNS, DHTASITDMQMSSDGTMFVSSSKDCSAKLFDSDSLMCLKT, and GHFG…HTFE.

The protein belongs to the eIF-3 subunit I family. In terms of assembly, component of the eukaryotic translation initiation factor 3 (eIF-3) complex.

It is found in the cytoplasm. Functionally, component of the eukaryotic translation initiation factor 3 (eIF-3) complex, which is involved in protein synthesis of a specialized repertoire of mRNAs and, together with other initiation factors, stimulates binding of mRNA and methionyl-tRNAi to the 40S ribosome. The eIF-3 complex specifically targets and initiates translation of a subset of mRNAs involved in cell proliferation. The chain is Eukaryotic translation initiation factor 3 subunit I from Anopheles gambiae (African malaria mosquito).